Here is a 714-residue protein sequence, read N- to C-terminus: Fatty acid oxidation complex subunit alpha (714 aa).

The interval 1–190 (MEMTSAFTLN…KLGLVDDVVP (190 aa)) is enoyl-CoA hydratase. The tract at residues 306–714 (APLNSVGILG…FWKTTATDLQ (409 aa)) is 3-hydroxyacyl-CoA dehydrogenase.

The protein in the N-terminal section; belongs to the enoyl-CoA hydratase/isomerase family. It in the central section; belongs to the 3-hydroxyacyl-CoA dehydrogenase family. In terms of assembly, heterotetramer of two alpha chains (FadJ) and two beta chains (FadI).

The protein resides in the cytoplasm. The enzyme catalyses a (3S)-3-hydroxyacyl-CoA = a (2E)-enoyl-CoA + H2O. The catalysed reaction is a 4-saturated-(3S)-3-hydroxyacyl-CoA = a (3E)-enoyl-CoA + H2O. It catalyses the reaction a (3S)-3-hydroxyacyl-CoA + NAD(+) = a 3-oxoacyl-CoA + NADH + H(+). It carries out the reaction (3S)-3-hydroxybutanoyl-CoA = (3R)-3-hydroxybutanoyl-CoA. It participates in lipid metabolism; fatty acid beta-oxidation. In terms of biological role, catalyzes the formation of a hydroxyacyl-CoA by addition of water on enoyl-CoA. Also exhibits 3-hydroxyacyl-CoA epimerase and 3-hydroxyacyl-CoA dehydrogenase activities. This Escherichia coli O8 (strain IAI1) protein is Fatty acid oxidation complex subunit alpha.